A 1310-amino-acid chain; its full sequence is Contactin-associated protein-like 4 (1310 aa).

The N-terminal stretch at 1–27 (MNMGSVAGAVLKMLLLLSTQNWNRVEA) is a signal peptide. Over 28-1243 (GNSYDCDEPL…LTHAIKSDSA (1216 aa)) the chain is Extracellular. The F5/8 type C domain occupies 33-179 (CDEPLVSALP…IGMRIEVFGC (147 aa)). A disulfide bridge links Cys33 with Cys179. One can recognise a Laminin G-like 1 domain in the interval 214-346 (FKTMESDGIL…NLFYNGVDVI (133 aa)). 3 N-linked (GlcNAc...) asparagine glycosylation sites follow: Asn262, Asn287, and Asn361. 4 disulfides stabilise this stretch: Cys334–Cys366, Cys517–Cys549, Cys555–Cys566, and Cys560–Cys575. One can recognise a Laminin G-like 2 domain in the interval 400-529 (FRTWNKAGLL…LISINNKMVD (130 aa)). N-linked (GlcNAc...) asparagine glycosylation is present at Asn540. Residues 551 to 588 (ISDRCLPNSCEHGGECSQSWSTFHCNCTNTGYTGATCH) form the EGF-like 1 domain. Asn576 is a glycosylation site (N-linked (GlcNAc...) asparagine). Residues Cys577 and Cys587 are joined by a disulfide bond. Residues 589–794 (SSVYEQSCEA…LLCRGDRPFW (206 aa)) form the Fibrinogen C-terminal domain. Asn604, Asn627, Asn639, Asn708, and Asn750 each carry an N-linked (GlcNAc...) asparagine glycan. Positions 795–960 (NAASFNTEAS…TVTPGVQPGC (166 aa)) constitute a Laminin G-like 3 domain. 4 cysteine pairs are disulfide-bonded: Cys933–Cys960, Cys964–Cys977, Cys971–Cys986, and Cys988–Cys998. The EGF-like 2 domain maps to 960 to 999 (CRGHCGSYGKLCRHGGKCREKPSGFFCDCSSSAYAGPFCS). Asn1019, Asn1025, and Asn1075 each carry an N-linked (GlcNAc...) asparagine glycan. The region spanning 1048-1204 (FRTTRAPSLL…VTGHVTESSC (157 aa)) is the Laminin G-like 4 domain. Cys1169 and Cys1204 are joined by a disulfide. A helical membrane pass occupies residues 1244–1264 (VIGGLIAVVIFILLCVSAIAV). Topologically, residues 1265 to 1310 (RIYQQKRLYKRNEAKRSENVDSAEAVLKSELHIQNAVGENQKEYFF) are cytoplasmic.

The protein belongs to the neurexin family. As to quaternary structure, interacts with TIAM1. Specifically present in developing cortical interneurons: highly expressed in cortical parvalbumin (PV) cells and midbrain dopaminergic neurons and is localized presynaptically (at protein level). Also present in the substantia nigra pars compacta (SnC) and ventral tegmental area (VTA) midbrain dopaminergic projection populations.

Its subcellular location is the presynaptic cell membrane. Functionally, presynaptic protein involved in both dopaminergic synaptic transmission and GABAergic system, thereby participating in the structural maturation of inhibitory interneuron synapses. Involved in the dopaminergic synaptic transmission by attenuating dopamine release through a presynaptic mechanism. Also participates in the GABAergic system. In Mus musculus (Mouse), this protein is Contactin-associated protein-like 4 (Cntnap4).